Consider the following 664-residue polypeptide: Probable urea active transporter 1 (664 aa).

The next 16 membrane-spanning stretches (helical) occupy residues 9 to 29 (SVGY…MIFV), 56 to 76 (GLVA…LTSA), 86 to 106 (GAFW…VLAI), 132 to 152 (GVFL…LLCG), 165 to 185 (TVAV…FGGI), 189 to 209 (FLTD…FSLA), 252 to 272 (GAIF…VDNG), 290 to 310 (ILGG…MGLV), 327 to 347 (MSDL…ALMG), 353 to 373 (ATLL…LIAV), 395 to 415 (LLYT…GFAT), 428 to 448 (YLLM…VMLF), 454 to 474 (IAVT…WLVV), 496 to 516 (AGNV…SIIF), 555 to 575 (VAAL…MYGT), and 587 to 607 (WVVV…IFPL).

It belongs to the sodium:solute symporter (SSF) (TC 2.A.21) family.

Its subcellular location is the membrane. Its function is as follows. Involved in active transport of urea. This chain is Probable urea active transporter 1 (dur3-1), found in Schizosaccharomyces pombe (strain 972 / ATCC 24843) (Fission yeast).